The primary structure comprises 220 residues: uncharacterized protein (220 aa).

This is an uncharacterized protein from Sinorhizobium fredii (strain NBRC 101917 / NGR234).